Reading from the N-terminus, the 302-residue chain is Oxygen-dependent coproporphyrinogen-III oxidase (302 aa).

S94 is a binding site for substrate. Residues H98 and H108 each coordinate a divalent metal cation. Catalysis depends on H108, which acts as the Proton donor. Residue 110-112 participates in substrate binding; sequence NVR. Residues H147 and H177 each coordinate a divalent metal cation. The segment at 242-277 is important for dimerization; it reads YVEFNLVFDRGTLFGLQSGGRAESILMSMPPVANWR. 260–262 contacts substrate; sequence GGR.

This sequence belongs to the aerobic coproporphyrinogen-III oxidase family. In terms of assembly, homodimer. The cofactor is a divalent metal cation.

It localises to the cytoplasm. It carries out the reaction coproporphyrinogen III + O2 + 2 H(+) = protoporphyrinogen IX + 2 CO2 + 2 H2O. It functions in the pathway porphyrin-containing compound metabolism; protoporphyrin-IX biosynthesis; protoporphyrinogen-IX from coproporphyrinogen-III (O2 route): step 1/1. In terms of biological role, involved in the heme biosynthesis. Catalyzes the aerobic oxidative decarboxylation of propionate groups of rings A and B of coproporphyrinogen-III to yield the vinyl groups in protoporphyrinogen-IX. This chain is Oxygen-dependent coproporphyrinogen-III oxidase, found in Ralstonia pickettii (strain 12J).